The chain runs to 764 residues: Thyrotropin receptor (764 aa).

The signal sequence occupies residues 1-20 (MRPADLLQLVLLLDLPRDLG). The Extracellular segment spans residues 21-413 (GMGCSSPPCE…EFNPCEDIMG (393 aa)). Cys-31 and Cys-41 are joined by a disulfide. N-linked (GlcNAc...) asparagine glycans are attached at residues Asn-77, Asn-99, and Asn-113. LRR repeat units lie at residues 100-124 (LSKVTHIEIRNTRNLTYIDPDALKE), 125-150 (LPLLKFLGIFNTGLKMFPDLTKVYST), 152-174 (IFFILEITDNPYMTSIPVNAFQG), 176-199 (CNETLTLKLYNNGFTSVQGYAFNG), 200-223 (TKLDAVYLNKNKYLTVIDKDAFGG), 227-248 (GPSLLDVSQTSVTALPSKGLEH), and 250-271 (KELIARNTWTLKKLPLSLSFLH). Asn-177 and Asn-198 each carry an N-linked (GlcNAc...) asparagine glycan. An N-linked (GlcNAc...) asparagine glycan is attached at Asn-302. Tyr-385 bears the Sulfotyrosine mark. A helical membrane pass occupies residues 414–441 (YKFLRIVVWFVSLLALLGNVFVLLILLT). Residues 442 to 450 (SHYKLNVPR) are Cytoplasmic-facing. A helical membrane pass occupies residues 451–473 (FLMCNLAFADFCMGMYLLLIASV). Residues 474–494 (DLYTHSEYYNHAIDWQTGPGC) are Extracellular-facing. A disulfide bridge connects residues Cys-494 and Cys-569. The helical transmembrane segment at 495-517 (NTAGFFTVFASELSVYTLTVITL) threads the bilayer. At 518–537 (ERWYAITFAMRLDRKIRLRH) the chain is on the cytoplasmic side. A helical transmembrane segment spans residues 538-560 (ACAIMVGGWVCCFLLALLPLVGI). Residues 561-580 (SSYAKVSICLPMDTETPLAL) are Extracellular-facing. The chain crosses the membrane as a helical span at residues 581 to 602 (AYIVFVLTLNIVAFVIVCCCYV). The Cytoplasmic portion of the chain corresponds to 603-625 (KIYITVRNPQYNPGDKDTKIAKR). The helical transmembrane segment at 626–649 (MAVLIFTDFICMAPISFYALSAIL) threads the bilayer. Over 650-660 (NKPLITVSNSK) the chain is Extracellular. Residues 661–682 (ILLVLFYPLNSCANPFLYAIFT) traverse the membrane as a helical segment. The Cytoplasmic segment spans residues 683–764 (KAFQRDVFIL…ISEEYMQTVL (82 aa)). The PDZ-binding motif lies at 762-764 (TVL).

Belongs to the G-protein coupled receptor 1 family. FSH/LSH/TSH subfamily. As to quaternary structure, interacts with heterodimer GPHA2:GPHB5; this interaction stimulates cAMP production. Interacts (via the PDZ-binding motif) with SCRIB; regulates TSHR trafficking and function. Post-translationally, glycosylated. In terms of processing, sulfated. Sulfation on Tyr-385 plays a role in thyrotropin receptor binding and activation. In terms of tissue distribution, expressed in thyroide cells (at protein level). Expressed in the thyroid.

Its subcellular location is the cell membrane. The protein localises to the basolateral cell membrane. Receptor for the thyroid-stimulating hormone (TSH) or thyrotropin. Also acts as a receptor for the heterodimeric glycoprotein hormone (GPHA2:GPHB5) or thyrostimulin. The activity of this receptor is mediated by G proteins which activate adenylate cyclase. Plays a central role in controlling thyroid cell metabolism. The chain is Thyrotropin receptor (TSHR) from Homo sapiens (Human).